The sequence spans 142 residues: Multiprotein-bridging factor 1a (142 aa).

Polar residues predominate over residues 51–64 (GTNKAASSGTSLNT). The segment at 51–77 (GTNKAASSGTSLNTKMLDDDTENLTHE) is disordered. Positions 87 to 141 (IMQARTDKKLTQSQLAQIINEKPQVIQEYESGKAIPNQQILSKLERALGAKLRGK) constitute an HTH cro/C1-type domain. Residues 98–117 (QSQLAQIINEKPQVIQEYES) constitute a DNA-binding region (H-T-H motif).

Belongs to the MBF1 family. In terms of tissue distribution, expressed in leaves, roots, stems, flowers, siliques and shoots. Detected only in anthers and some seeds in siliques.

It localises to the nucleus. It is found in the nucleolus. In terms of biological role, transcriptional coactivator that stimulates transcriptional activity by bridging regulatory proteins and TBP, thereby recruiting TBP to promoters occupied by DNA-binding regulators. This Arabidopsis thaliana (Mouse-ear cress) protein is Multiprotein-bridging factor 1a (MBF1A).